Reading from the N-terminus, the 131-residue chain is CLAVATA3/ESR (CLE)-related protein ESR1 (131 aa).

Residues 1–26 form the signal peptide; the sequence is MASRMGMVAIVSLFVCALAASTSVNA. Residues 49-131 form a disordered region; the sequence is RQQQQGGFIG…IGPPPLSDRY (83 aa). 2 positions are modified to hydroxyproline: P81 and P84. P84 carries an O-linked (Ara...) hydroxyproline glycan.

The protein belongs to the CLV3/ESR signal peptide family. Post-translationally, the O-glycosylation (arabinosylation) of the hydroxyproline Pro-84 enhances binding affinity of the ESR1p peptide for its receptor. As to expression, seed endosperm.

The protein localises to the secreted. Its subcellular location is the extracellular space. Functionally, extracellular signal peptide that regulates cell fate. The sequence is that of CLAVATA3/ESR (CLE)-related protein ESR1 from Zea mays (Maize).